The following is a 309-amino-acid chain: Verprolin (309 aa).

Positions 1–13 are enriched in pro residues; sequence MAPAPPPPPPAPA. The disordered stretch occupies residues 1-273; it reads MAPAPPPPPP…PNRVDDHGRF (273 aa). A WH2 domain is found at 27 to 44; sequence DRSALLNSIQKGKKLKKA. Positions 82 to 91 are enriched in polar residues; sequence LPTSSNNTQQ. The segment covering 141–207 has biased composition (pro residues); sequence TSAPPRPSIP…PPKVPPPPLS (67 aa).

The protein belongs to the verprolin family. As to quaternary structure, interacts with wsp1. Interacts with myo1 (via SH3 domain). Interacts with actin monomers.

It localises to the cytoplasm. The protein resides in the cytoskeleton. Its function is as follows. Involved in cytoskeletal organization and cellular growth. May exert its effects on the cytoskeleton directly, or indirectly via proline-binding proteins such as profilin or proteins possessing SH3 domains. Plays a role in actin patch assembly by enhancing the ability of myo1 to stimulate actin polymerization by the Arp2/3 complex. The chain is Verprolin from Schizosaccharomyces pombe (strain 972 / ATCC 24843) (Fission yeast).